The primary structure comprises 161 residues: Ragulator complex protein LAMTOR1 (161 aa).

The disordered stretch occupies residues M1–L43. A lipid anchor (N-myristoyl glycine) is attached at G2. 2 S-palmitoyl cysteine lipidation sites follow: C3 and C4. K20 is covalently cross-linked (Glycyl lysine isopeptide (Lys-Gly) (interchain with G-Cter in ubiquitin)). S27 is modified (phosphoserine). Residue K31 forms a Glycyl lysine isopeptide (Lys-Gly) (interchain with G-Cter in ubiquitin) linkage. Phosphoserine occurs at positions 42 and 56. A Glycyl lysine isopeptide (Lys-Gly) (interchain with G-Cter in ubiquitin) cross-link involves residue K60. A Phosphoserine modification is found at S98. Glycyl lysine isopeptide (Lys-Gly) (interchain with G-Cter in ubiquitin) cross-links involve residues K103 and K104. The segment at S121–P161 is interaction with LAMTOR2 and LAMTOR3. S141 bears the Phosphoserine mark.

Belongs to the LAMTOR1 family. In terms of assembly, part of the Ragulator complex composed of LAMTOR1, LAMTOR2, LAMTOR3, LAMTOR4 and LAMTOR5. LAMTOR4 and LAMTOR5 form a heterodimer that interacts, through LAMTOR1, with a LAMTOR2, LAMTOR3 heterodimer. Interacts with LAMTOR2 and LAMTOR3; the interaction is direct. The Ragulator complex interacts with both the mTORC1 complex and heterodimers constituted of the Rag GTPases RagA/RRAGA, RagB/RRAGB, RagC/RRAGC and RagD/RRAGD; regulated by amino acid availability. The Ragulator complex interacts with SLC38A9; the probable amino acid sensor. Component of the lysosomal folliculin complex (LFC), composed of FLCN, FNIP1 (or FNIP2), RagA/RRAGA or RagB/RRAGB GDP-bound, RagC/RRAGC or RagD/RRAGD GTP-bound, and Ragulator. Associates with the lysosomal V-ATPase complex; interaction promotes the guanine nucleotide exchange factor (GEF) of the Ragulator complex. Interacts with MMP14. Interacts with CDKN1B; prevents the interaction of CDKN1B with RHOA leaving RHOA in a form accessible to activation by ARHGEF2. Interacts with PIP4P1. N-terminal myristoylation and palmitoylation mediates its recruitment to lysosome membranes, thereby promoting localization of the Ragulator complex to lysosomes. N-myristoylation by NMT1 is required for palmitoylation at Cys-3 and Cys-4. May be palmitoylated by ZDHHC3. Post-translationally, ubiquitinated at Lys-60, Lys-103 and Lys-104 by UBE3A, promoting its degradation by the proteasome. Ubiquitination at Lys-20 impairs the association with the lysosomal V-ATPase complex. Deubiquitination at Lys-20 by USP32 promotes the association with the lysosomal V-ATPase complex and subsequent activation of the mTORC1 complex.

Its subcellular location is the lysosome membrane. The protein resides in the late endosome membrane. Its function is as follows. Key component of the Ragulator complex, a multiprotein complex involved in amino acid sensing and activation of mTORC1, a signaling complex promoting cell growth in response to growth factors, energy levels, and amino acids. Activated by amino acids through a mechanism involving the lysosomal V-ATPase, the Ragulator plays a dual role for the small GTPases Rag (RagA/RRAGA, RagB/RRAGB, RagC/RRAGC and/or RagD/RRAGD): it (1) acts as a guanine nucleotide exchange factor (GEF), activating the small GTPases Rag and (2) mediates recruitment of Rag GTPases to the lysosome membrane. Activated Ragulator and Rag GTPases function as a scaffold recruiting mTORC1 to lysosomes where it is in turn activated. LAMTOR1 is directly responsible for anchoring the Ragulator complex to the lysosomal membrane. LAMTOR1 wraps around the other subunits of the Ragulator complex to hold them in place and interacts with the Rag GTPases, thereby playing a key role in the recruitment of the mTORC1 complex to lysosomes. Also involved in the control of embryonic stem cells differentiation via non-canonical RagC/RRAGC and RagD/RRAGD activation: together with FLCN, it is necessary to recruit and activate RagC/RRAGC and RagD/RRAGD at the lysosomes, and to induce exit of embryonic stem cells from pluripotency via non-canonical, mTOR-independent TFE3 inactivation. Also required for late endosomes/lysosomes biogenesis it may regulate both the recycling of receptors through endosomes and the MAPK signaling pathway through recruitment of some of its components to late endosomes. May be involved in cholesterol homeostasis regulating LDL uptake and cholesterol release from late endosomes/lysosomes. May also play a role in RHOA activation. The sequence is that of Ragulator complex protein LAMTOR1 from Homo sapiens (Human).